A 341-amino-acid chain; its full sequence is UDP-glucose 4-epimerase (341 aa).

It belongs to the polysaccharide synthase family.

It carries out the reaction UDP-alpha-D-glucose = UDP-alpha-D-galactose. Functionally, epimerizes UDP-galactose to UDP-glucose. The chain is UDP-glucose 4-epimerase (capD) from Rickettsia akari (strain Hartford).